A 302-amino-acid polypeptide reads, in one-letter code: DDRGK domain-containing protein 1 (302 aa).

The helical transmembrane segment at 1-21 (MDPLLLGSVGVLVLAVTLIIW) threads the bilayer. At 22–302 (RLLKLQWDEK…IRLETPSAAE (281 aa)) the chain is on the cytoplasmic side. The segment at 101-178 (EYDEDGKKIG…EREEKERKEH (78 aa)) is disordered. Over residues 118 to 178 (QAKEEKRQMR…EREEKERKEH (61 aa)) the composition is skewed to basic and acidic residues.

It belongs to the DDRGK1 family.

Its subcellular location is the endoplasmic reticulum membrane. Substrate adapter for ufmylation, the covalent attachment of the ubiquitin-like modifier ufm-1 to substrate proteins. The protein is DDRGK domain-containing protein 1 of Caenorhabditis elegans.